The chain runs to 66 residues: Small ribosomal subunit protein bS21 (66 aa).

Belongs to the bacterial ribosomal protein bS21 family.

This Rickettsia felis (strain ATCC VR-1525 / URRWXCal2) (Rickettsia azadi) protein is Small ribosomal subunit protein bS21.